Consider the following 238-residue polypeptide: Thrombin-like enzyme collinein-1 (238 aa).

The region spanning 1–229 (VIGGDECNIN…HLDWIQNIIA (229 aa)) is the Peptidase S1 domain. Cystine bridges form between Cys-7/Cys-141, Cys-28/Cys-44, Cys-78/Cys-236, Cys-120/Cys-190, Cys-152/Cys-169, and Cys-180/Cys-205. Catalysis depends on charge relay system residues His-43 and Asp-88. Ser-184 (charge relay system) is an active-site residue.

This sequence belongs to the peptidase S1 family. Snake venom subfamily. Monomer. In terms of tissue distribution, expressed by the venom gland.

Its subcellular location is the secreted. With respect to regulation, inhibited by Cu(2+) and, to a lesser extent, by Zn(2+) and Ba(2+). Not inhibited by Ca(2+) and Mg(2+). In terms of biological role, thrombin-like snake venom serine protease. Releases fibrinopeptide A and B in the conversion of fibrinogen to fibrin, with preferential activity on the alpha chain of fibrinogen. Also hydrolyzes N-p-toluensulfonyl arginine ester (TAME) and chromogenic artificial substrates of the blood coagulation cascade: S-2222 for factor Xa, S-2302 for kallikrein and S-2238 for thrombin. When tested in vitro, the recombinant protein does not degrade blood clots, suggesting that this toxin lacks fibrinolytic activity. In addition, it moderately inhibits human Kv10.1/KCNH1/EAG1 currents, with a mechanism independent of its enzymatic activity. It selectively blocks Kv10.1/KCNH1/EAG1 in a time and dose-dependent manner (IC(50)=4.2 uM for native protein and IC(50)=2.5 uM for recombinant protein). It may have a preference in interacting with Kv10.1/KCNH1/EAG1 in its closed state, since the inhibitory effect of the toxin is decreased at more depolarized potentials. Corroboratively, it may have possible antitumor applications, since it reduces the viability of human breast cancer cell line MCF-7, which strongly expresses Kv10.1/KCNH1/EAG1, but does not affect the liver carcinoma and the non-tumorigenic epithelial breast cell lines, which weakly express Kv10.1/KCNH1/EAG1. When tested on peripheral blood mononuclear cells (PBMC), the native protein shows mild cytotoxicity, whereas the recombinant protein does not show any cytotoxicity. Native form is not immununogenic, since it does not induce statistically significant antibody production in mice, whereas recombinant form shows an antibody titer slightly higher than the native form. In vivo, subplantar injection in mice paw induces a discreet paw edema. In addition, intraperitoneal injection of the recombinant protein into mice led to fibrinogen depletion, resulting in the blood incoagulability. This is Thrombin-like enzyme collinein-1 from Crotalus durissus collilineatus (Brazilian rattlesnake).